A 372-amino-acid chain; its full sequence is 4-hydroxy-3-methylbut-2-en-1-yl diphosphate synthase (flavodoxin) (372 aa).

Residues Cys270, Cys273, Cys305, and Glu312 each coordinate [4Fe-4S] cluster.

Belongs to the IspG family. Requires [4Fe-4S] cluster as cofactor.

The catalysed reaction is (2E)-4-hydroxy-3-methylbut-2-enyl diphosphate + oxidized [flavodoxin] + H2O + 2 H(+) = 2-C-methyl-D-erythritol 2,4-cyclic diphosphate + reduced [flavodoxin]. The protein operates within isoprenoid biosynthesis; isopentenyl diphosphate biosynthesis via DXP pathway; isopentenyl diphosphate from 1-deoxy-D-xylulose 5-phosphate: step 5/6. Its function is as follows. Converts 2C-methyl-D-erythritol 2,4-cyclodiphosphate (ME-2,4cPP) into 1-hydroxy-2-methyl-2-(E)-butenyl 4-diphosphate. The chain is 4-hydroxy-3-methylbut-2-en-1-yl diphosphate synthase (flavodoxin) from Salmonella paratyphi B (strain ATCC BAA-1250 / SPB7).